We begin with the raw amino-acid sequence, 338 residues long: Phosphatidate cytidylyltransferase, mitochondrial (338 aa).

Belongs to the TAM41 family. Mg(2+) is required as a cofactor.

It localises to the mitochondrion inner membrane. It carries out the reaction a 1,2-diacyl-sn-glycero-3-phosphate + CTP + H(+) = a CDP-1,2-diacyl-sn-glycerol + diphosphate. The protein operates within phospholipid metabolism; CDP-diacylglycerol biosynthesis; CDP-diacylglycerol from sn-glycerol 3-phosphate: step 3/3. Its function is as follows. Catalyzes the conversion of phosphatidic acid (PA) to CDP-diacylglycerol (CDP-DAG), an essential intermediate in the synthesis of phosphatidylglycerol, cardiolipin and phosphatidylinositol. The chain is Phosphatidate cytidylyltransferase, mitochondrial (tamm41) from Danio rerio (Zebrafish).